A 218-amino-acid polypeptide reads, in one-letter code: Phosphoglycolate phosphatase (218 aa).

The active-site Nucleophile is the Asp7. Residues Asp7, Asp9, and Asp167 each coordinate Mg(2+).

The protein belongs to the HAD-like hydrolase superfamily. CbbY/CbbZ/Gph/YieH family. The cofactor is Mg(2+).

It catalyses the reaction 2-phosphoglycolate + H2O = glycolate + phosphate. It functions in the pathway organic acid metabolism; glycolate biosynthesis; glycolate from 2-phosphoglycolate: step 1/1. Its function is as follows. Specifically catalyzes the dephosphorylation of 2-phosphoglycolate. Is involved in the dissimilation of the intracellular 2-phosphoglycolate formed during the DNA repair of 3'-phosphoglycolate ends, a major class of DNA lesions induced by oxidative stress. This Cereibacter sphaeroides (strain ATCC 17029 / ATH 2.4.9) (Rhodobacter sphaeroides) protein is Phosphoglycolate phosphatase.